Consider the following 416-residue polypeptide: Serine protease hepsin (416 aa).

Topologically, residues 1 to 18 (MAKEGGRTAPCCSRPKVA) are cytoplasmic. The chain crosses the membrane as a helical; Signal-anchor for type II membrane protein span at residues 19–39 (ALTVGTLLFLTGIGAASWAIV). The Extracellular segment spans residues 40–416 (TILLRSDQEP…SEATGMVTQP (377 aa)). One can recognise an SRCR domain in the interval 53–150 (VQLSPGDSRL…RGRFLTATCQ (98 aa)). 8 cysteine pairs are disulfide-bonded: cysteine 76/cysteine 139, cysteine 89/cysteine 149, cysteine 118/cysteine 137, cysteine 152/cysteine 276, cysteine 187/cysteine 203, cysteine 290/cysteine 358, cysteine 321/cysteine 337, and cysteine 348/cysteine 380. Residue asparagine 111 is glycosylated (N-linked (GlcNAc...) asparagine). The Peptidase S1 domain maps to 162–404 (IVGGQDSSLG…FREWIFQAIK (243 aa)). Catalysis depends on charge relay system residues histidine 202 and aspartate 256. The active-site Charge relay system is serine 352.

This sequence belongs to the peptidase S1 family. As to expression, widely expressed. Present in brain, heart, kidney, liver, stomach, muscle, lung, testis, skin and eye. Not expressed in ovary and thynus. In inner ear tissues, expressed in stria vascularis, modiolus, organ of Corti and spiral ganglion.

It localises to the cell membrane. The protein resides in the apical cell membrane. The enzyme catalyses Cleavage after basic amino-acid residues, with Arg strongly preferred to Lys.. Its function is as follows. Serine protease that cleaves extracellular substrates, and contributes to the proteolytic processing of growth factors, such as HGF and MST1/HGFL. Plays a role in cell growth and maintenance of cell morphology. Plays a role in the proteolytic processing of ACE2. Mediates the proteolytic cleavage of urinary UMOD that is required for UMOD polymerization. This Rattus norvegicus (Rat) protein is Serine protease hepsin (Hpn).